Reading from the N-terminus, the 437-residue chain is Trigger factor (437 aa).

The 87-residue stretch at 174 to 260 folds into the PPIase FKBP-type domain; sequence GDFVQISFEG…VKSLKKKIFP (87 aa).

The protein belongs to the FKBP-type PPIase family. Tig subfamily.

It is found in the cytoplasm. The enzyme catalyses [protein]-peptidylproline (omega=180) = [protein]-peptidylproline (omega=0). In terms of biological role, involved in protein export. Acts as a chaperone by maintaining the newly synthesized protein in an open conformation. Functions as a peptidyl-prolyl cis-trans isomerase. The sequence is that of Trigger factor from Koribacter versatilis (strain Ellin345).